A 425-amino-acid chain; its full sequence is Succinyl-diaminopimelate desuccinylase (425 aa).

His-96 serves as a coordination point for Zn(2+). Residue Asp-98 is part of the active site. Asp-129 contacts Zn(2+). Glu-163 (proton acceptor) is an active-site residue. Positions 164, 192, and 378 each coordinate Zn(2+).

It belongs to the peptidase M20A family. DapE subfamily. In terms of assembly, homodimer. Requires Zn(2+) as cofactor. The cofactor is Co(2+).

The enzyme catalyses N-succinyl-(2S,6S)-2,6-diaminopimelate + H2O = (2S,6S)-2,6-diaminopimelate + succinate. The protein operates within amino-acid biosynthesis; L-lysine biosynthesis via DAP pathway; LL-2,6-diaminopimelate from (S)-tetrahydrodipicolinate (succinylase route): step 3/3. Functionally, catalyzes the hydrolysis of N-succinyl-L,L-diaminopimelic acid (SDAP), forming succinate and LL-2,6-diaminopimelate (DAP), an intermediate involved in the bacterial biosynthesis of lysine and meso-diaminopimelic acid, an essential component of bacterial cell walls. This Polaromonas sp. (strain JS666 / ATCC BAA-500) protein is Succinyl-diaminopimelate desuccinylase.